Consider the following 145-residue polypeptide: Methyl-coenzyme M reductase I operon protein D (145 aa).

In terms of assembly, MCR is composed of three subunits: alpha, beta, and gamma. The function of proteins C and D is not known.

The sequence is that of Methyl-coenzyme M reductase I operon protein D (mcrD) from Methanothermobacter thermautotrophicus (strain ATCC 29096 / DSM 1053 / JCM 10044 / NBRC 100330 / Delta H) (Methanobacterium thermoautotrophicum).